Here is a 422-residue protein sequence, read N- to C-terminus: C-type lectin domain family 4 member M (422 aa).

The Cytoplasmic segment spans residues 1-49; sequence MSDSKEPRVQPLGLLEEDPTTSGIRLFPRDFQFQQTHGHKSSTGCLGHG. The Endocytosis signal signature appears at 14 to 15; that stretch reads LL. The chain crosses the membrane as a helical; Signal-anchor for type II membrane protein span at residues 50–70; that stretch reads PLVLQLLSFALLAGVLVAILV. At 71–422 the chain is on the extracellular side; that stretch reads QVYKVPSSLS…KKPIACFRDE (352 aa). N-linked (GlcNAc...) asparagine glycosylation occurs at Asn-92. Repeat copies occupy residues 108-130, 131-151, 154-176, 177-199, 200-222, 223-245, 246-268, and 269-291. Residues 108–292 form an 8 X approximate tandem repeats region; the sequence is KLQEIYQELT…AFERLCCRCP (185 aa). Cystine bridges form between Cys-288-Cys-418, Cys-291-Cys-302, Cys-319-Cys-412, and Cys-391-Cys-404. Residues 297–413 form the C-type lectin domain; the sequence is FFQGNCYFMS…CNVDNYWICK (117 aa). Ca(2+) is bound by residues Glu-382, Asn-384, Ser-386, Glu-389, Asn-400, and Asp-401. Asn-384 carries an N-linked (GlcNAc...) asparagine glycan.

Homotetramer.

It localises to the membrane. Functionally, probable pathogen-recognition receptor involved in peripheral immune surveillance in liver. May mediate the endocytosis of pathogens which are subsequently degraded in lysosomal compartments. Probably recognizes in a calcium-dependent manner high mannose N-linked oligosaccharides in a variety of pathogen antigens. Is a receptor for ICAM3, probably by binding to mannose-like carbohydrates. The polypeptide is C-type lectin domain family 4 member M (CLEC4M) (Symphalangus syndactylus (Siamang)).